The sequence spans 1692 residues: Adenylate cyclase (1692 aa).

Disordered regions lie at residues 1-22 and 103-142; these read MDQS…FKTG and SLSD…YKEN. Residues 120–132 are compositionally biased toward basic and acidic residues; the sequence is ESSEKSEVPRDTR. Residues 174–195 form a required for interaction with gpa2 region; that stretch reads FTNLTFPEPISDDSDSVEFQRD. Residues 292–380 enclose the Ras-associating domain; it reads KEFFLRVYRD…SDEEINEEDN (89 aa). 21 LRR repeats span residues 430–450, 454–474, 477–498, 503–524, 526–547, 549–570, 572–594, 596–617, 618–639, 660–681, 684–705, 707–729, 730–751, 753–774, 783–805, 807–827, 831–852, 855–876, 878–899, 901–922, and 930–951; these read ELIS…DFME, KLKR…PITA, QLEV…IFSG, SLKE…TRYL, NLTY…ITEL, QLET…IGSL, KLKH…IGLL, NLET…SECP, KLNS…NPSA, NLVY…VIET, NVET…ISAM, NLKY…GKLK, HLVH…VWQV, SLKV…VATS, QLKI…EFVM, TVEE…TALE, CLKV…FFQN, DLKH…STAQ, LLET…EALS, SLRF…KAEK, and QLEY…EDTN. The 281-residue stretch at 995–1275 folds into the PPM-type phosphatase domain; that stretch reads RYGVCGYLSR…KNVLVVIVEL (281 aa). The 138-residue stretch at 1332 to 1469 folds into the Guanylate cyclase domain; it reads AMVFTDIKNS…PVVNRTSRVV (138 aa). 2 residues coordinate Mg(2+): Asp1337 and Asp1380. Mn(2+)-binding residues include Asp1337 and Asp1380. Residues 1585–1597 show a composition bias toward basic and acidic residues; that stretch reads SDSKSVHGEEGGS. Residues 1585–1614 are disordered; sequence SDSKSVHGEEGGSGKRSVSSLRNVSPSEST. Polar residues predominate over residues 1600–1614; the sequence is RSVSSLRNVSPSEST.

This sequence belongs to the adenylyl cyclase class-3 family. Interacts (via N-terminus) with gpa2; the interaction is direct and serves to activate adenylate cyclase and cAMP-PKA signaling, to repress sexual development and gluconeogenesis. Interacts with git1. Requires Mn(2+) as cofactor.

It is found in the cytoplasm. It carries out the reaction ATP = 3',5'-cyclic AMP + diphosphate. Its activity is regulated as follows. Activated by binding G protein gpa2. Activated by git1. In contrast to yeast cyclase, S.pombe cyclase is not likely to be regulated by RAS proteins. In terms of biological role, acts in glucose-induced cAMP signaling by catalyzing the synthesis of the second messenger, cAMP to activate PKA signaling and repress sexual development and gluconeogenesis. The polypeptide is Adenylate cyclase (Schizosaccharomyces pombe (strain 972 / ATCC 24843) (Fission yeast)).